The chain runs to 475 residues: Protein transport protein Sec61 subunit alpha (475 aa).

Helical transmembrane passes span 33 to 53 (LWTAITLFIFLVCCQIPLFGI), 76 to 96 (LMELGITPIVTSGLIMQLLAG), 118 to 138 (LFGMIITIGQAVVYVMTGMYG), 145 to 165 (AGICLLIIIQLFIASLIVLLL), 173 to 193 (YGLGSGISLFIATNICETIVW), 241 to 261 (NLMNLSATILVFGIVIYFQGF), 289 to 309 (IPIILQSALVSGLYVISQMLA), 354 to 374 (FLDPIHGLLYITFMLGSCAFF), 420 to 440 (AAFGGLCIGALSVLADFIGAI), and 441 to 461 (GSGTGILLAVTIIYQYFEIFV).

The protein belongs to the SecY/SEC61-alpha family. As to quaternary structure, the SEC61 channel-forming translocon complex consists of channel-forming core components SEC61A1, SEC61B and SEC61G and different auxiliary components such as SEC62 and SEC63. The SEC61 channel associates with the multi-pass translocon (MPT) complex. Expressed predominantly in epidermal cells of the embryo.

The protein localises to the endoplasmic reticulum membrane. Functionally, component of SEC61 channel-forming translocon complex that mediates transport of signal peptide-containing precursor polypeptides across the endoplasmic reticulum (ER). Forms a ribosome receptor and a gated pore in the ER membrane, both functions required for cotranslational translocation of nascent polypeptides. May cooperate with auxiliary protein SEC62, SEC63 and HSPA5/BiP to enable post-translational transport of small presecretory proteins. The SEC61 channel is also involved in ER membrane insertion of transmembrane proteins: it mediates membrane insertion of the first few transmembrane segments of proteins, while insertion of subsequent transmembrane regions of multi-pass membrane proteins is mediated by the multi-pass translocon (MPT) complex. In Halocynthia roretzi (Sea squirt), this protein is Protein transport protein Sec61 subunit alpha.